The following is a 276-amino-acid chain: uncharacterized protein (276 aa).

The AB hydrolase-1 domain maps to 20-137 (PVLIFIPGAN…PPINTFLPDS (118 aa)).

It belongs to the AB hydrolase superfamily.

This is an uncharacterized protein from Staphylococcus aureus (strain MRSA252).